The sequence spans 164 residues: Pyruvoyl-dependent arginine decarboxylase (164 aa).

At serine 52 the chain carries Pyruvic acid (Ser).

This sequence belongs to the PdaD family. The cofactor is pyruvate.

The catalysed reaction is L-arginine + H(+) = agmatine + CO2. The protein is Pyruvoyl-dependent arginine decarboxylase of Methanococcus maripaludis (strain C7 / ATCC BAA-1331).